The sequence spans 257 residues: Large ribosomal subunit protein uL2 (257 aa).

Residues 207-226 (VEHPFGGGNHQHIGKPSTIR) form a disordered region.

It belongs to the universal ribosomal protein uL2 family. Component of the large ribosomal subunit.

It is found in the cytoplasm. Its function is as follows. Component of the large ribosomal subunit. The ribosome is a large ribonucleoprotein complex responsible for the synthesis of proteins in the cell. The protein is Large ribosomal subunit protein uL2 (rpl8) of Ictalurus punctatus (Channel catfish).